The sequence spans 284 residues: Probable plastid-lipid-associated protein 10, chloroplastic (284 aa).

The N-terminal 40 residues, 1–40 (MDRIASATFSCPAISLSRVCRISPFGLNIKTNHRKRFSCR), are a transit peptide targeting the chloroplast.

This sequence belongs to the PAP/fibrillin family.

It localises to the plastid. Its subcellular location is the chloroplast. It is found in the plastoglobule. This is Probable plastid-lipid-associated protein 10, chloroplastic (PAP10) from Arabidopsis thaliana (Mouse-ear cress).